Consider the following 310-residue polypeptide: Coproporphyrin III ferrochelatase (310 aa).

Fe-coproporphyrin III is bound by residues Tyr13, Arg30, Arg46–Tyr47, Ser54, and Tyr125. 2 residues coordinate Fe(2+): His181 and Glu262.

This sequence belongs to the ferrochelatase family.

The protein localises to the cytoplasm. The catalysed reaction is Fe-coproporphyrin III + 2 H(+) = coproporphyrin III + Fe(2+). It functions in the pathway porphyrin-containing compound metabolism; protoheme biosynthesis. Involved in coproporphyrin-dependent heme b biosynthesis. Catalyzes the insertion of ferrous iron into coproporphyrin III to form Fe-coproporphyrin III. This Halalkalibacterium halodurans (strain ATCC BAA-125 / DSM 18197 / FERM 7344 / JCM 9153 / C-125) (Bacillus halodurans) protein is Coproporphyrin III ferrochelatase.